Consider the following 154-residue polypeptide: Protein aau3 (154 aa).

The 131-residue stretch at 2-132 (RLTKQTNYAV…QGYTIDDLVK (131 aa)) folds into the HTH rrf2-type domain. [2Fe-2S] cluster is bound by residues C91, C99, and C105.

Requires [2Fe-2S] cluster as cofactor.

Its function is as follows. Required for growth utilizing PHB cycle intermediates. The sequence is that of Protein aau3 (aau3) from Rhizobium meliloti (strain 1021) (Ensifer meliloti).